Reading from the N-terminus, the 938-residue chain is Leucine--tRNA ligase 1 (938 aa).

Residues Pro40–His50 carry the 'HIGH' region motif. A 'KMSKS' region motif is present at residues Lys620 to Ser624. Position 623 (Lys623) interacts with ATP.

The protein belongs to the class-I aminoacyl-tRNA synthetase family.

Its subcellular location is the cytoplasm. It catalyses the reaction tRNA(Leu) + L-leucine + ATP = L-leucyl-tRNA(Leu) + AMP + diphosphate. This is Leucine--tRNA ligase 1 from Metallosphaera sedula (strain ATCC 51363 / DSM 5348 / JCM 9185 / NBRC 15509 / TH2).